Consider the following 629-residue polypeptide: Protein fem-1 homolog B (629 aa).

ANK repeat units lie at residues 47–77, 89–118, 122–151, 155–184, 188–217, and 220–250; these read QRST…DVQQ, DGAT…NVNH, TNST…NISI, YDNT…DPNA, CGAT…AMVV, and HGMT…DAKS. One copy of the TPR repeat lies at 346 to 379; the sequence is SHPIIYRGAVYADNMQFEQCIKLWLHALQLRQKG. ANK repeat units lie at residues 485-529 and 533-570; these read EGGS…NVNA and MGNS…HTDM.

It belongs to the fem-1 family. In terms of assembly, component of a CRL2 E3 ubiquitin-protein ligase complex, also named ECS (Elongin BC-CUL2/5-SOCS-box protein) complex.

It localises to the cytoplasm. It is found in the nucleus. It participates in protein modification; protein ubiquitination. Its function is as follows. Substrate-recognition component of a Cul2-RING (CRL2) E3 ubiquitin-protein ligase complex of the DesCEND (destruction via C-end degrons) pathway, which recognizes a C-degron located at the extreme C terminus of target proteins, leading to their ubiquitination and degradation. The C-degron recognized by the DesCEND pathway is usually a motif of less than ten residues and can be present in full-length proteins, truncated proteins or proteolytically cleaved forms. The CRL2(FEM1B) complex specifically recognizes proteins ending with -Gly-Leu-Asp-Arg, leading to their ubiquitination and degradation. In Xenopus laevis (African clawed frog), this protein is Protein fem-1 homolog B.